Reading from the N-terminus, the 444-residue chain is Ribosome biogenesis protein YTM1 (444 aa).

Residues Val-8–Arg-89 form a ubiquitin-like (UBL) domain region. 7 WD repeats span residues Ser-99–Tyr-138, Gly-140–Ile-178, Gly-194–Ile-231, Ser-269–Thr-309, Thr-311–Ile-350, Gly-357–Thr-397, and Gly-408–Asn-444. Residues Ser-99–Asn-444 are sufficient for interaction with ERB1 and association with 66S pre-ribosomes.

Belongs to the WD repeat WDR12/YTM1 family. As to quaternary structure, component of the NOP7 complex, composed of ERB1, NOP7 and YTM1. The complex is held together by ERB1, which interacts with NOP7 via its N-terminal domain and with YTM1 via a high-affinity interaction between the seven-bladed beta-propeller domains of the 2 proteins. The NOP7 complex associates with the 66S pre-ribosome. Interacts (via UBL domain) with MDN1 (via VWFA/MIDAS domain).

The protein localises to the nucleus. Its subcellular location is the nucleolus. It is found in the nucleoplasm. Its function is as follows. Component of the NOP7 complex, which is required for maturation of the 25S and 5.8S ribosomal RNAs and formation of the 60S ribosome. The sequence is that of Ribosome biogenesis protein YTM1 from Kluyveromyces lactis (strain ATCC 8585 / CBS 2359 / DSM 70799 / NBRC 1267 / NRRL Y-1140 / WM37) (Yeast).